Here is a 465-residue protein sequence, read N- to C-terminus: Putrescine aminotransferase (465 aa).

Pyridoxal 5'-phosphate is bound by residues 150 to 151 (GT) and Q274. K300 carries the post-translational modification N6-(pyridoxal phosphate)lysine. Position 332 (T332) interacts with pyridoxal 5'-phosphate.

Belongs to the class-III pyridoxal-phosphate-dependent aminotransferase family. Putrescine aminotransferase subfamily. Pyridoxal 5'-phosphate serves as cofactor.

It catalyses the reaction an alkane-alpha,omega-diamine + 2-oxoglutarate = an omega-aminoaldehyde + L-glutamate. It carries out the reaction putrescine + 2-oxoglutarate = 1-pyrroline + L-glutamate + H2O. The catalysed reaction is cadaverine + 2-oxoglutarate = 5-aminopentanal + L-glutamate. Its pathway is amine and polyamine degradation; putrescine degradation; 4-aminobutanal from putrescine (transaminase route): step 1/1. Its function is as follows. Catalyzes the aminotransferase reaction from putrescine to 2-oxoglutarate, leading to glutamate and 4-aminobutanal, which spontaneously cyclizes to form 1-pyrroline. This is the first step in one of two pathways for putrescine degradation, where putrescine is converted into 4-aminobutanoate (gamma-aminobutyrate or GABA) via 4-aminobutanal. Also functions as a cadaverine transaminase in a a L-lysine degradation pathway to succinate that proceeds via cadaverine, glutarate and L-2-hydroxyglutarate. The polypeptide is Putrescine aminotransferase (Cronobacter sakazakii (strain ATCC BAA-894) (Enterobacter sakazakii)).